The following is a 202-amino-acid chain: MTELRIYATRGAGVEADRDSAVAAAPEALLSTSNAEQISAQLKTRGIKFQRWPSKPKLEQGAMQEQILEAYASLIASVQKNEGYQTVDVMRVERDQISGSTLRQTFRQEHQHAEDEVRFFVEGCGLFALHIKDEVLQVICEANDWIAIPAGTRHWFDMGVDPNYCVIRFFKNSGGWAASFTHDPIADHYPGLDQARKQTTQG.

Fe(2+) contacts are provided by His110, His112, Glu116, and His154. His110, His112, Glu116, and His154 together coordinate Ni(2+).

This sequence belongs to the acireductone dioxygenase (ARD) family. In terms of assembly, monomer. It depends on Fe(2+) as a cofactor. Ni(2+) serves as cofactor.

The enzyme catalyses 1,2-dihydroxy-5-(methylsulfanyl)pent-1-en-3-one + O2 = 3-(methylsulfanyl)propanoate + CO + formate + 2 H(+). The catalysed reaction is 1,2-dihydroxy-5-(methylsulfanyl)pent-1-en-3-one + O2 = 4-methylsulfanyl-2-oxobutanoate + formate + 2 H(+). It functions in the pathway amino-acid biosynthesis; L-methionine biosynthesis via salvage pathway; L-methionine from S-methyl-5-thio-alpha-D-ribose 1-phosphate: step 5/6. In terms of biological role, catalyzes 2 different reactions between oxygen and the acireductone 1,2-dihydroxy-3-keto-5-methylthiopentene (DHK-MTPene) depending upon the metal bound in the active site. Fe-containing acireductone dioxygenase (Fe-ARD) produces formate and 2-keto-4-methylthiobutyrate (KMTB), the alpha-ketoacid precursor of methionine in the methionine recycle pathway. Ni-containing acireductone dioxygenase (Ni-ARD) produces methylthiopropionate, carbon monoxide and formate, and does not lie on the methionine recycle pathway. The chain is Acireductone dioxygenase from Synechococcus sp. (strain CC9311).